Reading from the N-terminus, the 188-residue chain is Dual specificity protein phosphatase 18 (188 aa).

One can recognise a Tyrosine-protein phosphatase domain in the interval 19-160 (GLSQITKSLY…LIHYEFQLFG (142 aa)). Catalysis depends on Cys-104, which acts as the Phosphocysteine intermediate.

The protein belongs to the protein-tyrosine phosphatase family. Non-receptor class dual specificity subfamily. As to expression, widely expressed with highest levels in liver, brain, ovary and testis.

The protein localises to the cytoplasm. The protein resides in the nucleus. It is found in the mitochondrion inner membrane. The catalysed reaction is O-phospho-L-tyrosyl-[protein] + H2O = L-tyrosyl-[protein] + phosphate. The enzyme catalyses O-phospho-L-seryl-[protein] + H2O = L-seryl-[protein] + phosphate. It catalyses the reaction O-phospho-L-threonyl-[protein] + H2O = L-threonyl-[protein] + phosphate. Activated by manganese ions, inhibited by iodoacetic acid. In terms of biological role, can dephosphorylate single and diphosphorylated synthetic MAPK peptides, with preference for the phosphotyrosine and diphosphorylated forms over phosphothreonine. In vitro, dephosphorylates p-nitrophenyl phosphate (pNPP). The protein is Dual specificity protein phosphatase 18 (DUSP18) of Homo sapiens (Human).